We begin with the raw amino-acid sequence, 263 residues long: Endonuclease 8 (263 aa).

Proline 2 serves as the catalytic Schiff-base intermediate with DNA. Glutamate 3 serves as the catalytic Proton donor. Lysine 53 acts as the Proton donor; for beta-elimination activity in catalysis. DNA is bound by residues glutamine 70, arginine 125, and asparagine 169. Residues 229 to 263 (KVFHRDGERCERCGGIIEKTTLSSRPFYWCPGCQH) form an FPG-type zinc finger. Arginine 253 (proton donor; for delta-elimination activity) is an active-site residue.

The protein belongs to the FPG family. Zn(2+) serves as cofactor.

It carries out the reaction 2'-deoxyribonucleotide-(2'-deoxyribose 5'-phosphate)-2'-deoxyribonucleotide-DNA = a 3'-end 2'-deoxyribonucleotide-(2,3-dehydro-2,3-deoxyribose 5'-phosphate)-DNA + a 5'-end 5'-phospho-2'-deoxyribonucleoside-DNA + H(+). Functionally, involved in base excision repair of DNA damaged by oxidation or by mutagenic agents. Acts as a DNA glycosylase that recognizes and removes damaged bases. Has a preference for oxidized pyrimidines, such as thymine glycol, 5,6-dihydrouracil and 5,6-dihydrothymine. Has AP (apurinic/apyrimidinic) lyase activity and introduces nicks in the DNA strand. Cleaves the DNA backbone by beta-delta elimination to generate a single-strand break at the site of the removed base with both 3'- and 5'-phosphates. The polypeptide is Endonuclease 8 (Klebsiella pneumoniae subsp. pneumoniae (strain ATCC 700721 / MGH 78578)).